We begin with the raw amino-acid sequence, 393 residues long: Riboflavin biosynthesis protein RibBA (393 aa).

Residues 1–200 (MEFDEIKDAL…IESLVNYQKD (200 aa)) are DHBP synthase. Residues 27–28 (RE), D32, 139–143 (RTGHT), and E163 each bind D-ribulose 5-phosphate. Mg(2+) is bound at residue E28. H142 serves as a coordination point for Mg(2+). The segment at 201–393 (KDTSVELKAK…TKKIKMGHLI (193 aa)) is GTP cyclohydrolase II. GTP is bound at residue 249 to 253 (RIHSA). Residues C254, C265, and C267 each contribute to the Zn(2+) site. GTP contacts are provided by residues Q270, 291–293 (EGR), and T313. D325 serves as the catalytic Proton acceptor; for GTP cyclohydrolase activity. R327 serves as the catalytic Nucleophile; for GTP cyclohydrolase activity. The GTP site is built by S348 and K353.

This sequence in the N-terminal section; belongs to the DHBP synthase family. The protein in the C-terminal section; belongs to the GTP cyclohydrolase II family. Requires Mg(2+) as cofactor. It depends on Mn(2+) as a cofactor. Zn(2+) is required as a cofactor.

It carries out the reaction D-ribulose 5-phosphate = (2S)-2-hydroxy-3-oxobutyl phosphate + formate + H(+). It catalyses the reaction GTP + 4 H2O = 2,5-diamino-6-hydroxy-4-(5-phosphoribosylamino)-pyrimidine + formate + 2 phosphate + 3 H(+). It participates in cofactor biosynthesis; riboflavin biosynthesis; 2-hydroxy-3-oxobutyl phosphate from D-ribulose 5-phosphate: step 1/1. The protein operates within cofactor biosynthesis; riboflavin biosynthesis; 5-amino-6-(D-ribitylamino)uracil from GTP: step 1/4. Its function is as follows. Catalyzes the conversion of D-ribulose 5-phosphate to formate and 3,4-dihydroxy-2-butanone 4-phosphate. Catalyzes the conversion of GTP to 2,5-diamino-6-ribosylamino-4(3H)-pyrimidinone 5'-phosphate (DARP), formate and pyrophosphate. The polypeptide is Riboflavin biosynthesis protein RibBA (Staphylococcus haemolyticus (strain JCSC1435)).